The sequence spans 217 residues: Heart- and neural crest derivatives-expressed protein 2 (217 aa).

The tract at residues aspartate 76–asparagine 116 is disordered. The span at valine 83 to glycine 94 shows a compositional bias: gly residues. Residues proline 97–threonine 112 are compositionally biased toward basic residues. Residues lysine 99 to leucine 151 enclose the bHLH domain.

Efficient DNA binding requires dimerization with another bHLH protein. Forms homodimers and heterodimers with TCF3 gene products E12 and E47, HAND1 and HEY1, HEY2 and HEYL (hairy-related transcription factors).

Its subcellular location is the nucleus. In terms of biological role, essential for cardiac morphogenesis, particularly for the formation of the right ventricle and of the aortic arch arteries. Required for vascular development and regulation of angiogenesis, possibly through a VEGF signaling pathway. Also plays an important role in limb development, particularly in the establishment of anterior-posterior polarization, acting as an upstream regulator of sonic hedgehog (SHH) induction in the limb bud. Is involved in the development of branchial arches, which give rise to unique structures in the head and neck. Binds DNA on E-box consensus sequence 5'-CANNTG-3'. This Rattus norvegicus (Rat) protein is Heart- and neural crest derivatives-expressed protein 2 (Hand2).